We begin with the raw amino-acid sequence, 100 residues long: Toxin Rv0299 (100 aa).

Toxic component of a type II toxin-antitoxin (TA) system. Upon expression in M.smegmatis inhibits colony formation. Its toxic effect is neutralized by coexpression with cognate antitoxin Rv0298/MT0312. This chain is Toxin Rv0299, found in Mycobacterium tuberculosis (strain ATCC 25618 / H37Rv).